The primary structure comprises 221 residues: HTH-type transcriptional regulator McbR (221 aa).

The HTH gntR-type domain maps to 10–77 (VSLTLQVEND…PAQAFTVPEV (68 aa)). A DNA-binding region (H-T-H motif) is located at residues 37-56 (TKNLAEQLGMSITPVREALL).

In terms of biological role, important for biofilm formation. Represses expression of McbA by binding to its promoter region, which prevents colanic acid overproduction and mucoidy. The polypeptide is HTH-type transcriptional regulator McbR (mcbR) (Escherichia coli (strain K12)).